Consider the following 360-residue polypeptide: Peptide chain release factor 1 (360 aa).

Q235 bears the N5-methylglutamine mark.

Belongs to the prokaryotic/mitochondrial release factor family. In terms of processing, methylated by PrmC. Methylation increases the termination efficiency of RF1.

The protein localises to the cytoplasm. In terms of biological role, peptide chain release factor 1 directs the termination of translation in response to the peptide chain termination codons UAG and UAA. This chain is Peptide chain release factor 1, found in Janthinobacterium sp. (strain Marseille) (Minibacterium massiliensis).